Consider the following 135-residue polypeptide: MLSPKRTRFRKQHRGRMKGVSYRGNRICFGRYALQALEPAWITSRQIEAGRRAISRYARRGGKIWVRIFPDKPVTLRPAETRMGSGKGSPEYWVSVVKPDRILYEMGGVSETVARAAMEIAARKMPIRTKFVIAE.

It belongs to the universal ribosomal protein uL16 family. In terms of assembly, part of the 50S ribosomal subunit.

It is found in the plastid. The protein localises to the chloroplast. This chain is Large ribosomal subunit protein uL16c, found in Nymphaea alba (White water-lily).